Reading from the N-terminus, the 335-residue chain is Phospholipid scramblase 1 (335 aa).

The proline-rich domain (PRD) stretch occupies residues 1 to 101 (MEKHGPPEHA…NHPGGPGGTP (101 aa)). The segment at 1-102 (MEKHGPPEHA…HPGGPGGTPW (102 aa)) is disordered. The Cytoplasmic segment spans residues 1–305 (MEKHGPPEHA…IQFPLDLDVK (305 aa)). 6 repeat units span residues 23–29 (QGPYPGP), 30–36 (QGPYPGP), 37–43 (QGPYAGP), 44–50 (QGPYPGP), 51–57 (QGPYAGP), and 58–64 (QGPYPGP). The interval 23-71 (QGPYPGPQGPYPGPQGPYAGPQGPYPGPQGPYAGPQGPYPGPQPGYPVP) is 7 X 7 AA tandem repeats of Q-G-P-Y-[AP]-G-P. Over residues 26–37 (YPGPQGPYPGPQ) the composition is skewed to pro residues. Residues 59-72 (GPYPGPQPGYPVPP) are compositionally biased toward pro residues. Positions 64–72 (PQPGYPVPP) match the SH3-binding 1 motif. The stretch at 65–71 (QPGYPVP) is one 7; approximate repeat. Residue Tyr-91 is modified to Phosphotyrosine; by ABL. Residues 101 to 109 (PWMQAPPPP) carry the SH3-binding 2 motif. Thr-178 is modified (phosphothreonine; by PKC/PRKCD). 4 S-palmitoyl cysteine lipidation sites follow: Cys-201, Cys-202, Cys-205, and Cys-206. The Nuclear localization signal signature appears at 274–283 (GKISKQWSGF). The helical transmembrane segment at 306–322 (MKAVMLGACFLIDFMFF) threads the bilayer. Over 323–335 (ERTGNEEQRSGVW) the chain is Extracellular.

Belongs to the phospholipid scramblase family. As to quaternary structure, forms homooligomers in the presence of calcium. Interacts with ABL. Interacts with RELT, RELL1 and RELL2. Interacts with OXSR1 in the presence of RELT. Interacts with OCLN, TOP2A and TOP2B. Interacts with TRPC1, TRPC4 and TRPC5. Interacts with ILDR1. The cofactor is Ca(2+). It depends on Mg(2+) as a cofactor. Zn(2+) is required as a cofactor. In terms of processing, phosphorylated on tyrosine residues. Phosphorylated by OXSR1 in the presence of RELT. Phosphorylation at Thr-178 by PKC/PKCD increases its phospholipid scramblase activity during both cell stimulation and apoptosis. Post-translationally, palmitoylation is required for its phospholipid scramblase activity. Palmitoylation regulates its localization to the cell membrane or the nucleus; trafficking to the cell membrane is dependent upon palmitoylation whereas in the absence of palmitoylation, localizes to the nucleus.

Its subcellular location is the cell membrane. It localises to the nucleus. It is found in the cytoplasm. The protein localises to the perinuclear region. It catalyses the reaction a 1,2-diacyl-sn-glycero-3-phosphocholine(in) = a 1,2-diacyl-sn-glycero-3-phosphocholine(out). The enzyme catalyses a 1,2-diacyl-sn-glycero-3-phosphoethanolamine(in) = a 1,2-diacyl-sn-glycero-3-phosphoethanolamine(out). It carries out the reaction a 1,2-diacyl-sn-glycero-3-phospho-L-serine(in) = a 1,2-diacyl-sn-glycero-3-phospho-L-serine(out). Functionally, catalyzes calcium-induced ATP-independent rapid bidirectional and non-specific distribution of phospholipids (lipid scrambling or lipid flip-flop) between the inner and outer leaflet of the plasma membrane resulting in collapse of the phospholipid asymmetry which leads to phosphatidylserine externalization on the cell surface. Mediates calcium-dependent phosphatidylserine externalization and apoptosis in neurons via its association with TRPC5. Also exhibits magnesium-dependent nuclease activity against double-stranded DNA and RNA but not single-stranded DNA and can enhance DNA decatenation mediated by TOP2A. Negatively regulates FcR-mediated phagocytosis in differentiated macrophages. May contribute to cytokine-regulated cell proliferation and differentiation. This chain is Phospholipid scramblase 1 (Plscr1), found in Rattus norvegicus (Rat).